Consider the following 116-residue polypeptide: Large ribosomal subunit protein bL19 (116 aa).

Belongs to the bacterial ribosomal protein bL19 family.

Its function is as follows. This protein is located at the 30S-50S ribosomal subunit interface and may play a role in the structure and function of the aminoacyl-tRNA binding site. This chain is Large ribosomal subunit protein bL19, found in Roseiflexus castenholzii (strain DSM 13941 / HLO8).